We begin with the raw amino-acid sequence, 227 residues long: MSEFSLVLDDIQKSYNHGKANEINVLRGASTRIARGEIVGLIAPSGAGKSTLLQIAGLLDTADAGRVEIGGELVTGATDRARTAARRGKVGFVYQFHHLLPEFSAVENIVLPQLAHGVAAGEAEARALDLLGRVGMAARATHRPGELSGGEQQRVAFCRSLANAPALMLADEPTGNLDPATSDTVFDVLMELVRGTGLSALIATHNHELAARMDRVLRLDEGVLVSA.

In terms of domain architecture, ABC transporter spans 6–227; sequence LVLDDIQKSY…RLDEGVLVSA (222 aa). 43 to 50 is a binding site for ATP; it reads APSGAGKS.

The protein belongs to the ABC transporter superfamily. Lipoprotein translocase (TC 3.A.1.125) family. The complex is composed of two ATP-binding proteins (LolD) and two transmembrane proteins (LolC and LolE).

It localises to the cell inner membrane. In terms of biological role, part of the ABC transporter complex LolCDE involved in the translocation of mature outer membrane-directed lipoproteins, from the inner membrane to the periplasmic chaperone, LolA. Responsible for the formation of the LolA-lipoprotein complex in an ATP-dependent manner. This chain is Lipoprotein-releasing system ATP-binding protein LolD, found in Jannaschia sp. (strain CCS1).